The following is a 353-amino-acid chain: Quinolinate synthase (353 aa).

His-47 and Ser-68 together coordinate iminosuccinate. Residue Cys-113 participates in [4Fe-4S] cluster binding. Iminosuccinate is bound by residues 139-141 (YAN) and Ser-156. Cys-200 is a binding site for [4Fe-4S] cluster. Residues 226–228 (HPE) and Thr-243 each bind iminosuccinate. Cys-297 contacts [4Fe-4S] cluster.

It belongs to the quinolinate synthase family. Type 1 subfamily. [4Fe-4S] cluster serves as cofactor.

It localises to the cytoplasm. It carries out the reaction iminosuccinate + dihydroxyacetone phosphate = quinolinate + phosphate + 2 H2O + H(+). It functions in the pathway cofactor biosynthesis; NAD(+) biosynthesis; quinolinate from iminoaspartate: step 1/1. Its function is as follows. Catalyzes the condensation of iminoaspartate with dihydroxyacetone phosphate to form quinolinate. This chain is Quinolinate synthase, found in Vibrio parahaemolyticus serotype O3:K6 (strain RIMD 2210633).